The sequence spans 906 residues: Protein translocase subunit SecA (906 aa).

Residues Gln-86, 104–108, and Asp-511 each bind ATP; that span reads GEGKT. The segment covering 852 to 888 has biased composition (basic and acidic residues); the sequence is EHESVIDNNQRHDEDEQEEAPKVKQVRREGPKVKRND. Positions 852–906 are disordered; it reads EHESVIDNNQRHDEDEQEEAPKVKQVRREGPKVKRNDPCPCGSGKKYKQCHSKVE. Residues Cys-890, Cys-892, Cys-901, and His-902 each coordinate Zn(2+). Residues 896–906 are compositionally biased toward basic residues; that stretch reads KKYKQCHSKVE.

Belongs to the SecA family. In terms of assembly, monomer and homodimer. Part of the essential Sec protein translocation apparatus which comprises SecA, SecYEG and auxiliary proteins SecDF-YajC and YidC. Zn(2+) is required as a cofactor.

It localises to the cell inner membrane. The protein resides in the cytoplasm. The catalysed reaction is ATP + H2O + cellular proteinSide 1 = ADP + phosphate + cellular proteinSide 2.. In terms of biological role, part of the Sec protein translocase complex. Interacts with the SecYEG preprotein conducting channel. Has a central role in coupling the hydrolysis of ATP to the transfer of proteins into and across the cell membrane, serving both as a receptor for the preprotein-SecB complex and as an ATP-driven molecular motor driving the stepwise translocation of polypeptide chains across the membrane. The chain is Protein translocase subunit SecA from Francisella tularensis subsp. tularensis (strain SCHU S4 / Schu 4).